We begin with the raw amino-acid sequence, 249 residues long: Cytochrome c oxidase subunit 2 (249 aa).

The N-terminal stretch at 1–13 (MLNLFQIMNMINN) is a signal peptide. The Mitochondrial intermembrane portion of the chain corresponds to 14 to 40 (DVPTPYGFYFQDSATPNQEGILELHDN). The helical transmembrane segment at 41-62 (IMFYLVVILGLVSWMLFTIVRT) threads the bilayer. The Mitochondrial matrix portion of the chain corresponds to 63 to 80 (YSRNPMAYKYIKHGQTIE). Residues 81–105 (IIWKIFPAVILLTIAFPSFILLYLC) form a helical membrane-spanning segment. At 106–249 (DEVISPAMTI…PKFLEWLNEQ (144 aa)) the chain is on the mitochondrial intermembrane side. Residues His-184, Cys-219, Glu-221, Cys-223, His-227, and Met-230 each coordinate Cu cation. Residue Glu-221 participates in Mg(2+) binding.

Belongs to the cytochrome c oxidase subunit 2 family. In terms of assembly, component of the cytochrome c oxidase (complex IV, CIV), a multisubunit enzyme composed of a catalytic core of 3 subunits and several supernumerary subunits. The complex exists as a monomer or a dimer and forms supercomplexes (SCs) in the inner mitochondrial membrane with ubiquinol-cytochrome c oxidoreductase (cytochrome b-c1 complex, complex III, CIII). Requires Cu cation as cofactor. The signal sequence of COX2 is processed by IMP1.

Its subcellular location is the mitochondrion inner membrane. The enzyme catalyses 4 Fe(II)-[cytochrome c] + O2 + 8 H(+)(in) = 4 Fe(III)-[cytochrome c] + 2 H2O + 4 H(+)(out). Its function is as follows. Component of the cytochrome c oxidase, the last enzyme in the mitochondrial electron transport chain which drives oxidative phosphorylation. The respiratory chain contains 3 multisubunit complexes succinate dehydrogenase (complex II, CII), ubiquinol-cytochrome c oxidoreductase (cytochrome b-c1 complex, complex III, CIII) and cytochrome c oxidase (complex IV, CIV), that cooperate to transfer electrons derived from NADH and succinate to molecular oxygen, creating an electrochemical gradient over the inner membrane that drives transmembrane transport and the ATP synthase. Cytochrome c oxidase is the component of the respiratory chain that catalyzes the reduction of oxygen to water. Electrons originating from reduced cytochrome c in the intermembrane space (IMS) are transferred via the dinuclear copper A center (CU(A)) of subunit 2 and heme A of subunit 1 to the active site in subunit 1, a binuclear center (BNC) formed by heme A3 and copper B (CU(B)). The BNC reduces molecular oxygen to 2 water molecules using 4 electrons from cytochrome c in the IMS and 4 protons from the mitochondrial matrix. The protein is Cytochrome c oxidase subunit 2 (COX2) of Maudiozyma exigua (Yeast).